The sequence spans 308 residues: Elongation factor Ts (308 aa).

Positions 79-82 (TDFV) are involved in Mg(2+) ion dislocation from EF-Tu.

It belongs to the EF-Ts family.

It is found in the cytoplasm. Associates with the EF-Tu.GDP complex and induces the exchange of GDP to GTP. It remains bound to the aminoacyl-tRNA.EF-Tu.GTP complex up to the GTP hydrolysis stage on the ribosome. This Bdellovibrio bacteriovorus (strain ATCC 15356 / DSM 50701 / NCIMB 9529 / HD100) protein is Elongation factor Ts.